A 228-amino-acid polypeptide reads, in one-letter code: Phosphoribosylformylglycinamidine synthase subunit PurQ (228 aa).

One can recognise a Glutamine amidotransferase type-1 domain in the interval 3-226 (FAVIVFPGSN…VNYWRETHVV (224 aa)). The active-site Nucleophile is Cys-86. Active-site residues include His-195 and Glu-197.

As to quaternary structure, part of the FGAM synthase complex composed of 1 PurL, 1 PurQ and 2 PurS subunits.

It is found in the cytoplasm. It carries out the reaction N(2)-formyl-N(1)-(5-phospho-beta-D-ribosyl)glycinamide + L-glutamine + ATP + H2O = 2-formamido-N(1)-(5-O-phospho-beta-D-ribosyl)acetamidine + L-glutamate + ADP + phosphate + H(+). The enzyme catalyses L-glutamine + H2O = L-glutamate + NH4(+). It functions in the pathway purine metabolism; IMP biosynthesis via de novo pathway; 5-amino-1-(5-phospho-D-ribosyl)imidazole from N(2)-formyl-N(1)-(5-phospho-D-ribosyl)glycinamide: step 1/2. Functionally, part of the phosphoribosylformylglycinamidine synthase complex involved in the purines biosynthetic pathway. Catalyzes the ATP-dependent conversion of formylglycinamide ribonucleotide (FGAR) and glutamine to yield formylglycinamidine ribonucleotide (FGAM) and glutamate. The FGAM synthase complex is composed of three subunits. PurQ produces an ammonia molecule by converting glutamine to glutamate. PurL transfers the ammonia molecule to FGAR to form FGAM in an ATP-dependent manner. PurS interacts with PurQ and PurL and is thought to assist in the transfer of the ammonia molecule from PurQ to PurL. The protein is Phosphoribosylformylglycinamidine synthase subunit PurQ of Geobacillus thermodenitrificans (strain NG80-2).